We begin with the raw amino-acid sequence, 248 residues long: Aliphatic sulfonates import ATP-binding protein SsuB 2 (248 aa).

The region spanning 14-230 (VRVESLVRSF…DHGHRRFGEI (217 aa)) is the ABC transporter domain. 46 to 53 (GRSGSGKS) contacts ATP.

Belongs to the ABC transporter superfamily. Aliphatic sulfonates importer (TC 3.A.1.17.2) family. As to quaternary structure, the complex is composed of two ATP-binding proteins (SsuB), two transmembrane proteins (SsuC) and a solute-binding protein (SsuA).

It localises to the cell inner membrane. It carries out the reaction ATP + H2O + aliphatic sulfonate-[sulfonate-binding protein]Side 1 = ADP + phosphate + aliphatic sulfonateSide 2 + [sulfonate-binding protein]Side 1.. Functionally, part of the ABC transporter complex SsuABC involved in aliphatic sulfonates import. Responsible for energy coupling to the transport system. This Mesorhizobium japonicum (strain LMG 29417 / CECT 9101 / MAFF 303099) (Mesorhizobium loti (strain MAFF 303099)) protein is Aliphatic sulfonates import ATP-binding protein SsuB 2.